The primary structure comprises 214 residues: RNA pyrophosphohydrolase (214 aa).

One can recognise a Nudix hydrolase domain in the interval 6–149; that stretch reads GFRPNVGIIL…KRDVYQLALT (144 aa). The Nudix box signature appears at 38–59; it reads GGIKYGETPMQAMYRELHEETG.

It belongs to the Nudix hydrolase family. RppH subfamily. It depends on a divalent metal cation as a cofactor.

Accelerates the degradation of transcripts by removing pyrophosphate from the 5'-end of triphosphorylated RNA, leading to a more labile monophosphorylated state that can stimulate subsequent ribonuclease cleavage. The protein is RNA pyrophosphohydrolase of Burkholderia cenocepacia (strain HI2424).